The following is a 690-amino-acid chain: Heterogeneous nuclear ribonucleoprotein M (690 aa).

Over residues 1–13 (MAAGVEAAAEVAA) the composition is skewed to low complexity. Positions 1 to 63 (MAAGVEAAAE…KRGGNRFEPY (63 aa)) are disordered. Ala-2 bears the N-acetylalanine mark. Lys-17 is covalently cross-linked (Glycyl lysine isopeptide (Lys-Gly) (interchain with G-Cter in SUMO2)). Ser-29 bears the Phosphoserine mark. Glycyl lysine isopeptide (Lys-Gly) (interchain with G-Cter in SUMO2) cross-links involve residues Lys-37, Lys-68, and Lys-82. Residues 37-49 (KGEERPTQNEKRK) show a composition bias toward basic and acidic residues. 2 RRM domains span residues 70–148 (YRAF…EDPD) and 164–241 (STVF…MDER). At Ser-85 the chain carries Phosphoserine. Residues Lys-87 and Lys-126 each participate in a glycyl lysine isopeptide (Lys-Gly) (interchain with G-Cter in SUMO2) cross-link. Lys-133 is subject to N6-acetyllysine; alternate. Lys-133 is covalently cross-linked (Glycyl lysine isopeptide (Lys-Gly) (interchain with G-Cter in SUMO2); alternate). Residues Lys-142 and Lys-144 each participate in a glycyl lysine isopeptide (Lys-Gly) (interchain with G-Cter in SUMO2) cross-link. Ser-164 is modified (phosphoserine). Residue Lys-181 forms a Glycyl lysine isopeptide (Lys-Gly) (interchain with G-Cter in SUMO2) linkage. N6-acetyllysine; alternate is present on Lys-237. Lys-237 participates in a covalent cross-link: Glycyl lysine isopeptide (Lys-Gly) (interchain with G-Cter in SUMO2); alternate. Residues Lys-245 and Lys-305 each participate in a glycyl lysine isopeptide (Lys-Gly) (interchain with G-Cter in SUMO2) cross-link. Residues Ser-325 and Ser-337 each carry the phosphoserine modification. Residues Lys-341 and Lys-348 each participate in a glycyl lysine isopeptide (Lys-Gly) (interchain with G-Cter in SUMO2) cross-link. Ser-357 carries the post-translational modification Phosphoserine. Repeat copies occupy residues 360–365 (GIERMG), 367–372 (GIDRIS), 375–380 (GMERMG), and 386–391 (GMDRVG). The interval 360 to 568 (GIERMGPGID…ALGAGIERMG (209 aa)) is 27 X 6 AA repeats of [GEVSTPAN]-[ILMV]-[DE]-[RH]-[MLVI]-[GAV]. Ser-392 carries the phosphoserine modification. Tandem repeats lie at residues 393-398 (EIERMG), 400-405 (VMDRMG), and 406-411 (SVERMG). At Ser-412 the chain carries Phosphoserine. Repeat copies occupy residues 413-418 (GIERMG), 421-426 (GLDHMA), 428-433 (SIERMG), and 435-440 (TMERIG). Position 428 is a phosphoserine (Ser-428). At Ser-441 the chain carries Phosphoserine. 16 tandem repeats follow at residues 442 to 447 (GVERMG), 453 to 458 (GLERMA), 460 to 465 (PIDRVG), 467 to 472 (TIERMG), 474 to 479 (GVERMG), 481 to 486 (AIERMG), 488 to 493 (SMDRMV), 500 to 505 (GLERMG), 507 to 512 (VMDRMA), 514 to 519 (GLERMG), 522 to 527 (NLERMG), 528 to 532 (LERMG), 535 to 540 (SLERMG), 541 to 545 (LERMG), 548 to 553 (SLERMG), and 563 to 568 (GIERMG). Omega-N-methylarginine is present on Arg-456. Residue Ser-488 is modified to Phosphoserine. Ser-535 carries the phosphoserine modification. Ser-548 is modified (phosphoserine). Phosphoserine occurs at positions 578, 593, and 597. Residue Lys-611 forms a Glycyl lysine isopeptide (Lys-Gly) (interchain with G-Cter in SUMO2) linkage. Positions 613-689 (CQIFVRNLPF…REIDVRIDRN (77 aa)) constitute an RRM 3 domain. Phosphothreonine is present on Thr-625. Lys-627 participates in a covalent cross-link: Glycyl lysine isopeptide (Lys-Gly) (interchain with G-Cter in SUMO2). Position 632 is an N6-acetyllysine (Lys-632). Glycyl lysine isopeptide (Lys-Gly) (interchain with G-Cter in SUMO2) cross-links involve residues Lys-645 and Lys-652. At Lys-658 the chain carries N6-acetyllysine; alternate. Residue Lys-658 forms a Glycyl lysine isopeptide (Lys-Gly) (interchain with G-Cter in SUMO2); alternate linkage. Lys-658 participates in a covalent cross-link: Glycyl lysine isopeptide (Lys-Gly) (interchain with G-Cter in SUMO1); alternate. The residue at position 661 (Ser-661) is a Phosphoserine. Residue Lys-676 forms a Glycyl lysine isopeptide (Lys-Gly) (interchain with G-Cter in SUMO2) linkage.

In terms of assembly, identified in the spliceosome C complex. Interacts with PPIA/CYPA. Post-translationally, sumoylated. In terms of tissue distribution, expressed in all tissues tested, including liver, heart, lung, skeletal muscle, kidney, stomach, large intestine, small intestine, pancreas, spleen, peritoneal macrophage and thyroid.

It localises to the nucleus matrix. Pre-mRNA binding protein, binds avidly to poly(G) and poly(U) RNA homopolymers. Involved in splicing. Acts as a receptor for carcinoembryonic antigen in Kupffer cells, may initiate a series of signaling events leading to tyrosine phosphorylation of proteins and induction of IL-1 alpha, IL-6, IL-10 and tumor necrosis factor alpha cytokines. This chain is Heterogeneous nuclear ribonucleoprotein M (Hnrnpm), found in Rattus norvegicus (Rat).